Consider the following 38-residue polypeptide: Photosystem II reaction center protein L (38 aa).

A helical membrane pass occupies residues 17 to 37 (SLYWGLLLIFVLAVLFSNYFF).

The protein belongs to the PsbL family. PSII is composed of 1 copy each of membrane proteins PsbA, PsbB, PsbC, PsbD, PsbE, PsbF, PsbH, PsbI, PsbJ, PsbK, PsbL, PsbM, PsbT, PsbX, PsbY, PsbZ, Psb30/Ycf12, at least 3 peripheral proteins of the oxygen-evolving complex and a large number of cofactors. It forms dimeric complexes.

It is found in the plastid. The protein resides in the chloroplast thylakoid membrane. One of the components of the core complex of photosystem II (PSII). PSII is a light-driven water:plastoquinone oxidoreductase that uses light energy to abstract electrons from H(2)O, generating O(2) and a proton gradient subsequently used for ATP formation. It consists of a core antenna complex that captures photons, and an electron transfer chain that converts photonic excitation into a charge separation. This subunit is found at the monomer-monomer interface and is required for correct PSII assembly and/or dimerization. This is Photosystem II reaction center protein L from Oenothera argillicola (Appalachian evening primrose).